The sequence spans 342 residues: GTPase Obg (342 aa).

In terms of domain architecture, Obg spans 1–159 (MQFIDRAEIE…RHLRLELKLL (159 aa)). In terms of domain architecture, OBG-type G spans 160–328 (AEVGIIGLPN…LLAKVWQQLE (169 aa)). GTP is bound by residues 166–173 (GLPNAGKS), 191–195 (FTTLI), 213–216 (DIPG), 280–283 (NKID), and 309–311 (SAV). Residues S173 and T193 each contribute to the Mg(2+) site.

It belongs to the TRAFAC class OBG-HflX-like GTPase superfamily. OBG GTPase family. Monomer. Mg(2+) is required as a cofactor.

It localises to the cytoplasm. An essential GTPase which binds GTP, GDP and possibly (p)ppGpp with moderate affinity, with high nucleotide exchange rates and a fairly low GTP hydrolysis rate. Plays a role in control of the cell cycle, stress response, ribosome biogenesis and in those bacteria that undergo differentiation, in morphogenesis control. The protein is GTPase Obg of Microcystis aeruginosa (strain NIES-843 / IAM M-2473).